We begin with the raw amino-acid sequence, 152 residues long: ESAT-6 secretion machinery protein EssA (152 aa).

The Cytoplasmic segment spans residues 1–114 (MLMNSVIALT…PYIQNKQEKK (114 aa)). The disordered stretch occupies residues 62 to 83 (ERQQQIKNDMFQNQASHSTRLN). Residues 66–80 (QIKNDMFQNQASHST) are compositionally biased toward polar residues. The helical transmembrane segment at 115-135 (IFPYILMSVGAFLTLGFVIFS) threads the bilayer. Topologically, residues 136–152 (IHKGRRTKNESARKSNI) are extracellular.

This sequence belongs to the EssA family.

Its subcellular location is the cell membrane. In terms of biological role, component of the ESAT-6 secretion system (Ess). Required for the secretion of EsxA and EsxB. In Staphylococcus aureus (strain COL), this protein is ESAT-6 secretion machinery protein EssA.